Here is a 339-residue protein sequence, read N- to C-terminus: Dihydroorotate dehydrogenase (quinone) (339 aa).

FMN is bound by residues alanine 61–lysine 65 and threonine 85. Lysine 65 is a substrate binding site. Asparagine 110–phenylalanine 114 contributes to the substrate binding site. The FMN site is built by asparagine 138 and asparagine 171. Asparagine 171 lines the substrate pocket. Residue serine 174 is the Nucleophile of the active site. Asparagine 176 contacts substrate. FMN-binding residues include lysine 216 and threonine 244. Substrate is bound at residue asparagine 245–threonine 246. FMN is bound by residues glycine 267, glycine 296, and tyrosine 317–serine 318.

The protein belongs to the dihydroorotate dehydrogenase family. Type 2 subfamily. Monomer. It depends on FMN as a cofactor.

Its subcellular location is the cell membrane. The catalysed reaction is (S)-dihydroorotate + a quinone = orotate + a quinol. It functions in the pathway pyrimidine metabolism; UMP biosynthesis via de novo pathway; orotate from (S)-dihydroorotate (quinone route): step 1/1. In terms of biological role, catalyzes the conversion of dihydroorotate to orotate with quinone as electron acceptor. This is Dihydroorotate dehydrogenase (quinone) from Saccharophagus degradans (strain 2-40 / ATCC 43961 / DSM 17024).